We begin with the raw amino-acid sequence, 331 residues long: Peroxidase 69 (331 aa).

The N-terminal stretch at 1–23 is a signal peptide; sequence MGRGYNLLFVLVTFLVLVAAVTA. Cystine bridges form between C46–C122, C79–C84, C128–C327, and C205–C237. Residue H77 is the Proton acceptor of the active site. Residues D78, V81, G83, D85, and S87 each contribute to the Ca(2+) site. N93 is a glycosylation site (N-linked (GlcNAc...) asparagine). P168 lines the substrate pocket. H198 serves as a coordination point for heme b. Residue T199 coordinates Ca(2+). The N-linked (GlcNAc...) asparagine glycan is linked to N216. Residues D248, S251, and D256 each contribute to the Ca(2+) site.

It belongs to the peroxidase family. Classical plant (class III) peroxidase subfamily. Heme b is required as a cofactor. It depends on Ca(2+) as a cofactor. Mainly expressed in roots and slightly in leaves.

The protein resides in the secreted. It catalyses the reaction 2 a phenolic donor + H2O2 = 2 a phenolic radical donor + 2 H2O. Functionally, removal of H(2)O(2), oxidation of toxic reductants, biosynthesis and degradation of lignin, suberization, auxin catabolism, response to environmental stresses such as wounding, pathogen attack and oxidative stress. These functions might be dependent on each isozyme/isoform in each plant tissue. The polypeptide is Peroxidase 69 (PER69) (Arabidopsis thaliana (Mouse-ear cress)).